The following is a 72-amino-acid chain: Translation initiation factor IF-1 (72 aa).

Positions 1–72 (MAKDGVIEVE…NRGRITYRYK (72 aa)) constitute an S1-like domain.

Belongs to the IF-1 family. Component of the 30S ribosomal translation pre-initiation complex which assembles on the 30S ribosome in the order IF-2 and IF-3, IF-1 and N-formylmethionyl-tRNA(fMet); mRNA recruitment can occur at any time during PIC assembly.

It localises to the cytoplasm. Functionally, one of the essential components for the initiation of protein synthesis. Stabilizes the binding of IF-2 and IF-3 on the 30S subunit to which N-formylmethionyl-tRNA(fMet) subsequently binds. Helps modulate mRNA selection, yielding the 30S pre-initiation complex (PIC). Upon addition of the 50S ribosomal subunit IF-1, IF-2 and IF-3 are released leaving the mature 70S translation initiation complex. In Bifidobacterium adolescentis (strain ATCC 15703 / DSM 20083 / NCTC 11814 / E194a), this protein is Translation initiation factor IF-1.